A 163-amino-acid polypeptide reads, in one-letter code: Phosphopantetheine adenylyltransferase (163 aa).

Threonine 10 contributes to the substrate binding site. ATP is bound by residues 10-11 (TF) and histidine 18. Substrate contacts are provided by lysine 42, leucine 75, and arginine 89. Residues 90–92 (GVR), glutamate 100, and 125–131 (YTYVASS) each bind ATP.

This sequence belongs to the bacterial CoaD family. Homohexamer. Requires Mg(2+) as cofactor.

It localises to the cytoplasm. The enzyme catalyses (R)-4'-phosphopantetheine + ATP + H(+) = 3'-dephospho-CoA + diphosphate. It functions in the pathway cofactor biosynthesis; coenzyme A biosynthesis; CoA from (R)-pantothenate: step 4/5. Functionally, reversibly transfers an adenylyl group from ATP to 4'-phosphopantetheine, yielding dephospho-CoA (dPCoA) and pyrophosphate. This chain is Phosphopantetheine adenylyltransferase, found in Pelodictyon phaeoclathratiforme (strain DSM 5477 / BU-1).